We begin with the raw amino-acid sequence, 603 residues long: Ribosome-inactivating protein PMRIPt (603 aa).

The first 39 residues, 1–39, serve as a signal peptide directing secretion; it reads MRVVAGILYIVVMAICGLGIQGGTLQDYPSVYFQDSTLQ. N-linked (GlcNAc...) asparagine glycosylation is found at N74 and N168. The active site involves E208. 3 cysteine pairs are disulfide-bonded: C297–C335, C351–C370, and C392–C409. 2 consecutive Ricin B-type lectin domains span residues 338–466 and 467–593; these read GEPT…VGDD and VEPI…WMTM. A 1-alpha repeat occupies 348–388; sequence DGLCMDVRNESNNDGIPIQLWPCGAQRNQQWTFHTDGTIQS. N-linked (GlcNAc...) asparagine glycans are attached at residues N356 and N408. Residues 389-430 form a 1-beta repeat; sequence MGKCMTSNGYHPGDYVMIFNCSTAPVPDATKWVVSIDGSITN. Residues 433–466 form a 1-gamma repeat; that stretch reads SGLVLTAPQAAQTTILLVVRNTHSAKQGRSVGDD. A 2-alpha repeat occupies 478-516; that stretch reads KYMCLQGNNENNTRVWLEDCAVDRPQQWWALYSDGTIRV. Cystine bridges form between C481/C497 and C523/C540. Residue N488 is glycosylated (N-linked (GlcNAc...) asparagine). One copy of the 2-beta repeat lies at 520–558; it reads RSLCVTSDGHSSRDAIIILTCDGGINQRLVFNTDGTILN. A 2-gamma repeat occupies 561 to 597; it reads AQLVMDVRQSNVALRQIILYQPTGNPNQQWMTMITRT.

The protein belongs to the ribosome-inactivating protein family. Type 2 RIP subfamily. As to quaternary structure, tetramer of four pairs of disulfide bound A-B chains. The precursor is processed in two chains, A and B, that are linked by a disulfide bond. Post-translationally, glycosylated. As to expression, expressed in rhizome and more abundantly in leaves (at protein level).

It carries out the reaction Endohydrolysis of the N-glycosidic bond at one specific adenosine on the 28S rRNA.. Strongly inhibited by asialofetuin and asialomucin. Functionally, galNAc-specific agglutinin. Behaves as a type-2 ribosome-inactivating protein. Inhibits mammalian ribosomes. The A chain is responsible for inhibiting protein synthesis through the catalytic inactivation of 60S ribosomal subunits by removing adenine from position 4,324 of 28S rRNA. The B chain binds to cell receptors and probably facilitates the entry into the cell of the A chain; B chains are also responsible for cell agglutination (lectin activity). Involved in plant defense against insects. Has very low cytotoxic activity against the human tumor cell lines CEM and Molt4. The polypeptide is Ribosome-inactivating protein PMRIPt (Polygonatum multiflorum (Solomon's seal)).